An 88-amino-acid polypeptide reads, in one-letter code: Small ribosomal subunit protein uS19 (88 aa).

The protein belongs to the universal ribosomal protein uS19 family.

Its function is as follows. Protein S19 forms a complex with S13 that binds strongly to the 16S ribosomal RNA. This chain is Small ribosomal subunit protein uS19, found in Mycoplasma mycoides subsp. mycoides SC (strain CCUG 32753 / NCTC 10114 / PG1).